The chain runs to 375 residues: Succinyl-diaminopimelate desuccinylase (375 aa).

Zn(2+) is bound at residue H66. The active site involves D68. Residue D99 coordinates Zn(2+). The Proton acceptor role is filled by E133. Zn(2+)-binding residues include E134, E162, and H348.

The protein belongs to the peptidase M20A family. DapE subfamily. Homodimer. Zn(2+) serves as cofactor. It depends on Co(2+) as a cofactor.

The enzyme catalyses N-succinyl-(2S,6S)-2,6-diaminopimelate + H2O = (2S,6S)-2,6-diaminopimelate + succinate. Its pathway is amino-acid biosynthesis; L-lysine biosynthesis via DAP pathway; LL-2,6-diaminopimelate from (S)-tetrahydrodipicolinate (succinylase route): step 3/3. In terms of biological role, catalyzes the hydrolysis of N-succinyl-L,L-diaminopimelic acid (SDAP), forming succinate and LL-2,6-diaminopimelate (DAP), an intermediate involved in the bacterial biosynthesis of lysine and meso-diaminopimelic acid, an essential component of bacterial cell walls. This Erwinia tasmaniensis (strain DSM 17950 / CFBP 7177 / CIP 109463 / NCPPB 4357 / Et1/99) protein is Succinyl-diaminopimelate desuccinylase.